Here is a 256-residue protein sequence, read N- to C-terminus: tRNA-cytidine(32) 2-sulfurtransferase 1 (256 aa).

A PP-loop motif motif is present at residues 38–43 (SGGKDS). C113, C116, and C204 together coordinate [4Fe-4S] cluster.

This sequence belongs to the TtcA family. As to quaternary structure, homodimer. Requires Mg(2+) as cofactor. The cofactor is [4Fe-4S] cluster.

It is found in the cytoplasm. The enzyme catalyses cytidine(32) in tRNA + S-sulfanyl-L-cysteinyl-[cysteine desulfurase] + AH2 + ATP = 2-thiocytidine(32) in tRNA + L-cysteinyl-[cysteine desulfurase] + A + AMP + diphosphate + H(+). Its pathway is tRNA modification. Its function is as follows. Catalyzes the ATP-dependent 2-thiolation of cytidine in position 32 of tRNA, to form 2-thiocytidine (s(2)C32). The sulfur atoms are provided by the cysteine/cysteine desulfurase (IscS) system. In Francisella philomiragia subsp. philomiragia (strain ATCC 25017 / CCUG 19701 / FSC 153 / O#319-036), this protein is tRNA-cytidine(32) 2-sulfurtransferase 1.